The primary structure comprises 468 residues: Glutamate--tRNA ligase 2 (468 aa).

The 'HIGH' region signature appears at 13–23 (PSPTGYLHIGG). The 'KMSKS' region signature appears at 241–245 (KLSKR). Residue K244 participates in ATP binding.

This sequence belongs to the class-I aminoacyl-tRNA synthetase family. Glutamate--tRNA ligase type 1 subfamily. In terms of assembly, monomer.

It localises to the cytoplasm. The enzyme catalyses tRNA(Glu) + L-glutamate + ATP = L-glutamyl-tRNA(Glu) + AMP + diphosphate. Its function is as follows. Catalyzes the attachment of glutamate to tRNA(Glu) in a two-step reaction: glutamate is first activated by ATP to form Glu-AMP and then transferred to the acceptor end of tRNA(Glu). The chain is Glutamate--tRNA ligase 2 from Paracoccus denitrificans (strain Pd 1222).